The sequence spans 214 residues: External core antigen (214 aa).

Positions 1–19 (MQLFHLCLIISCTCPTVQA) are cleaved as a signal peptide. The tract at residues 25-27 (GWL) is HBEAG. The disordered stretch occupies residues 165-214 (NAPILSTLPETTVVRRRDRGRSPRRRTPSPRRRRSQSPRRRRSQSRESQC). Basic residues predominate over residues 178 to 207 (VRRRDRGRSPRRRTPSPRRRRSQSPRRRRS). A 1; half-length repeat occupies 186–192 (SPRRRTP). The 3 X 8 AA repeats of S-P-R-R-R-R-S-Q stretch occupies residues 186–208 (SPRRRTPSPRRRRSQSPRRRRSQ). The propeptide occupies 186 to 214 (SPRRRTPSPRRRRSQSPRRRRSQSRESQC). A run of 2 repeats spans residues 193–200 (SPRRRRSQ) and 201–208 (SPRRRRSQ).

This sequence belongs to the orthohepadnavirus precore antigen family. In terms of assembly, homodimerizes. Post-translationally, phosphorylated. Cleaved by host furin.

It localises to the secreted. Its subcellular location is the host nucleus. Functionally, may regulate immune response to the intracellular capsid in acting as a T-cell tolerogen, by having an immunoregulatory effect which prevents destruction of infected cells by cytotoxic T-cells. This immune regulation may predispose to chronicity during perinatal infections and prevent severe liver injury during adult infections. The chain is External core antigen from Hepatitis B virus genotype A2 subtype adw2 (isolate Germany/991/1990) (HBV-A).